A 322-amino-acid polypeptide reads, in one-letter code: Phosphatidylserine decarboxylase proenzyme (322 aa).

Active-site charge relay system; for autoendoproteolytic cleavage activity residues include D90, H147, and S254. S254 functions as the Schiff-base intermediate with substrate; via pyruvic acid; for decarboxylase activity in the catalytic mechanism. Position 254 is a pyruvic acid (Ser); by autocatalysis (S254). Positions 293–322 (PDAEPAPLPAEEIEAEHDASPLVDDKKDQV) are disordered. The segment covering 308–322 (EHDASPLVDDKKDQV) has biased composition (basic and acidic residues).

This sequence belongs to the phosphatidylserine decarboxylase family. PSD-B subfamily. Prokaryotic type I sub-subfamily. In terms of assembly, heterodimer of a large membrane-associated beta subunit and a small pyruvoyl-containing alpha subunit. It depends on pyruvate as a cofactor. Post-translationally, is synthesized initially as an inactive proenzyme. Formation of the active enzyme involves a self-maturation process in which the active site pyruvoyl group is generated from an internal serine residue via an autocatalytic post-translational modification. Two non-identical subunits are generated from the proenzyme in this reaction, and the pyruvate is formed at the N-terminus of the alpha chain, which is derived from the carboxyl end of the proenzyme. The autoendoproteolytic cleavage occurs by a canonical serine protease mechanism, in which the side chain hydroxyl group of the serine supplies its oxygen atom to form the C-terminus of the beta chain, while the remainder of the serine residue undergoes an oxidative deamination to produce ammonia and the pyruvoyl prosthetic group on the alpha chain. During this reaction, the Ser that is part of the protease active site of the proenzyme becomes the pyruvoyl prosthetic group, which constitutes an essential element of the active site of the mature decarboxylase.

The protein localises to the cell membrane. The enzyme catalyses a 1,2-diacyl-sn-glycero-3-phospho-L-serine + H(+) = a 1,2-diacyl-sn-glycero-3-phosphoethanolamine + CO2. Its pathway is phospholipid metabolism; phosphatidylethanolamine biosynthesis; phosphatidylethanolamine from CDP-diacylglycerol: step 2/2. In terms of biological role, catalyzes the formation of phosphatidylethanolamine (PtdEtn) from phosphatidylserine (PtdSer). The protein is Phosphatidylserine decarboxylase proenzyme of Escherichia coli O9:H4 (strain HS).